Here is a 130-residue protein sequence, read N- to C-terminus: Small ribosomal subunit protein uS9 (130 aa).

The interval 107–130 (DSREVERKKVGLRKARRRPQFSKR) is disordered. A compositionally biased stretch (basic residues) spans 116-130 (VGLRKARRRPQFSKR).

It belongs to the universal ribosomal protein uS9 family.

This chain is Small ribosomal subunit protein uS9, found in Marinomonas sp. (strain MWYL1).